The following is an 82-amino-acid chain: Omega-conotoxin-like TxO6 (82 aa).

A signal peptide spans 1–22; the sequence is MKLTCVVIVAVLFLTAWTLVMA. Residues 23-50 constitute a propeptide that is removed on maturation; sequence DDSNNGLANLFSKSRDEMEDPEAAKLEK. 3 disulfides stabilise this stretch: Cys53–Cys71, Cys60–Cys76, and Cys70–Cys81.

Belongs to the conotoxin O1 superfamily. Expressed by the venom duct.

Its subcellular location is the secreted. In terms of biological role, omega-conotoxins act at presynaptic membranes, they bind and block voltage-gated calcium channels (Cav). This Conus textile (Cloth-of-gold cone) protein is Omega-conotoxin-like TxO6.